Reading from the N-terminus, the 326-residue chain is Peroxidase 3 (326 aa).

Positions 1–24 (MNCLIAIALSVSFFLVGIVGPIQA) are cleaved as a signal peptide. 4 cysteine pairs are disulfide-bonded: Cys35–Cys113, Cys68–Cys73, Cys119–Cys321, and Cys198–Cys231. His66 serves as the catalytic Proton acceptor. Ca(2+)-binding residues include Asp67, Val70, Gly72, Asp74, and Ser76. 2 N-linked (GlcNAc...) asparagine glycosylation sites follow: Asn80 and Asn138. Pro161 contacts substrate. Asn166 is a glycosylation site (N-linked (GlcNAc...) asparagine). Heme b is bound at residue His191. Ca(2+) is bound at residue Thr192. N-linked (GlcNAc...) asparagine glycans are attached at residues Asn207 and Asn237. 3 residues coordinate Ca(2+): Asp244, Ser247, and Asp252.

The protein belongs to the peroxidase family. Classical plant (class III) peroxidase subfamily. The cofactor is heme b. Ca(2+) is required as a cofactor. As to expression, expressed in root cells.

It is found in the secreted. It carries out the reaction 2 a phenolic donor + H2O2 = 2 a phenolic radical donor + 2 H2O. Removal of H(2)O(2), oxidation of toxic reductants, biosynthesis and degradation of lignin, suberization, auxin catabolism, response to environmental stresses such as wounding, pathogen attack and oxidative stress. These functions might be dependent on each isozyme/isoform in each plant tissue. The chain is Peroxidase 3 (PER3) from Arabidopsis thaliana (Mouse-ear cress).